The primary structure comprises 256 residues: Small ribosomal subunit protein eS1 (256 aa).

A compositionally biased stretch (basic residues) spans 1–18 (MAVGKNKRLSKGKKGVKK). The disordered stretch occupies residues 1–21 (MAVGKNKRLSKGKKGVKKRTV). A2 carries the N-acetylalanine; partial modification.

Belongs to the eukaryotic ribosomal protein eS1 family. As to quaternary structure, component of the small ribosomal subunit. Mature ribosomes consist of a small (40S) and a large (60S) subunit. The 40S subunit contains about 33 different proteins and 1 molecule of RNA (18S). The 60S subunit contains about 49 different proteins and 3 molecules of RNA (25S, 5.8S and 5S).

The protein localises to the cytoplasm. The sequence is that of Small ribosomal subunit protein eS1 (rps1) from Aspergillus niger (strain ATCC MYA-4892 / CBS 513.88 / FGSC A1513).